Reading from the N-terminus, the 202-residue chain is Holliday junction branch migration complex subunit RuvA (202 aa).

Residues 1–63 (MIAFLSGRVV…EDSLTLFGFA (63 aa)) are domain I. The interval 64 to 142 (DDDERDTFER…EPGGDTAATP (79 aa)) is domain II. Residues 143–152 (EQSAAAAPRN) are flexible linker. The segment at 152–202 (NWRAQVVSGLVNLGWSTREAEAAADAVAAEAGEQPDVAALLRSALRRLSRA) is domain III.

This sequence belongs to the RuvA family. In terms of assembly, homotetramer. Forms an RuvA(8)-RuvB(12)-Holliday junction (HJ) complex. HJ DNA is sandwiched between 2 RuvA tetramers; dsDNA enters through RuvA and exits via RuvB. An RuvB hexamer assembles on each DNA strand where it exits the tetramer. Each RuvB hexamer is contacted by two RuvA subunits (via domain III) on 2 adjacent RuvB subunits; this complex drives branch migration. In the full resolvosome a probable DNA-RuvA(4)-RuvB(12)-RuvC(2) complex forms which resolves the HJ.

It localises to the cytoplasm. In terms of biological role, the RuvA-RuvB-RuvC complex processes Holliday junction (HJ) DNA during genetic recombination and DNA repair, while the RuvA-RuvB complex plays an important role in the rescue of blocked DNA replication forks via replication fork reversal (RFR). RuvA specifically binds to HJ cruciform DNA, conferring on it an open structure. The RuvB hexamer acts as an ATP-dependent pump, pulling dsDNA into and through the RuvAB complex. HJ branch migration allows RuvC to scan DNA until it finds its consensus sequence, where it cleaves and resolves the cruciform DNA. In Thermobifida fusca (strain YX), this protein is Holliday junction branch migration complex subunit RuvA.